The chain runs to 452 residues: Septin-10 (452 aa).

One can recognise a Septin-type G domain in the interval 36 to 302 (QGFCFNILCV…ELYRRCKLQE (267 aa)). The G1 motif stretch occupies residues 46 to 53 (GETGIGKS). GTP is bound by residues 46–53 (GETGIGKS), glycine 101, 182–190 (KADTISKSE), glycine 236, and arginine 251. Positions 98 to 101 (NTVG) are G3 motif. Residues 181 to 184 (AKAD) form a G4 motif region. A Phosphoserine modification is found at serine 414.

Belongs to the TRAFAC class TrmE-Era-EngA-EngB-Septin-like GTPase superfamily. Septin GTPase family. As to quaternary structure, septins polymerize into heterooligomeric protein complexes that form filaments, and can associate with cellular membranes, actin filaments and microtubules. GTPase activity is required for filament formation. Interacts with ADGB. In terms of processing, proteolytically cleaved in vitro in a calmodulin-dependent manner.

The protein localises to the cytoplasm. The protein resides in the cytoskeleton. It localises to the cell projection. It is found in the cilium. Its subcellular location is the flagellum. Functionally, filament-forming cytoskeletal GTPase. May play a role in cytokinesis (Potential). This is Septin-10 from Mus musculus (Mouse).